The primary structure comprises 288 residues: Probable aquaporin PIP2-2 (288 aa).

Residues 1-21 (MAKDIEASAPEGGEFSAKDYT) are disordered. Transmembrane regions (helical) follow at residues 42–62 (AVIA…ATVI) and 81–101 (GVGI…LVYC). An NPA 1 motif is present at residues 111-113 (NPA). The next 3 helical transmembrane spans lie at 130–150 (VLYI…VKGF), 172–192 (GTGL…VFSA), and 204–224 (IPVL…LATI). Residues 232–234 (NPA) carry the NPA 2 motif. The helical transmembrane segment at 254–274 (IFWVGPLIGAAIAAAYHQYVL) threads the bilayer.

This sequence belongs to the MIP/aquaporin (TC 1.A.8) family. PIP (TC 1.A.8.11) subfamily. In terms of tissue distribution, expressed in roots, leaves and anthers.

The protein resides in the cell membrane. In terms of biological role, aquaporins facilitate the transport of water and small neutral solutes across cell membranes. In Oryza sativa subsp. japonica (Rice), this protein is Probable aquaporin PIP2-2 (PIP2-2).